A 956-amino-acid chain; its full sequence is RNA-binding protein 44 (956 aa).

The segment at aspartate 301–valine 321 is disordered. The 75-residue stretch at serine 750–glycine 824 folds into the RRM domain. Residues lysine 831–lysine 855 are disordered. The segment covering serine 840–threonine 854 has biased composition (basic and acidic residues).

Its subcellular location is the cytoplasm. Functionally, component of intercellular bridges during meiosis. Intercellular bridges are evolutionarily conserved structures that connect differentiating germ cells. Not required for fertility. The sequence is that of RNA-binding protein 44 (rbm44) from Danio rerio (Zebrafish).